The primary structure comprises 529 residues: MQQRRPVRRALLSVSDKAGIIEFAQALSARGVELLSTGGTARLLAEKGLPVTEVSDYTGFPEMMDGRVKTLHPKVHGGILGRRGQDDAIMEQHHIAPIDMVVVNLYPFAETVARVGCSLEDAVENIDIGGPTMVRSAAKNHKDVAIVVKSSDYDAIIKEMDANEGSLTLDTRFDLAIKAFEHTAAYDSMIANYFGSMVPAYHGESKEAAGRFPRTLNLNFIKKQDMRYGENSHQQAAFYIEENVKEASVATAQQVQGKALSYNNIADTDAALECVKEFNEPACVIVKHANPCGVAVSTSILDAYDRAYKTDPTSAFGGIIAFNRELDAETAQAIISRQFVEVIIAPSASEEALKITAAKQNVRVLTCGQWASRVPGLDFKRVNGGLLVQDRDLGMVSEAELRVVSKRQPTEQELRDALFCWKVAKFVKSNAIVYAKENMTIGIGAGQMSRVYSAKIAGIKAADEGLEVKGSAMASDAFFPFRDGIDAAAAVGVSCVIQPGGSIRDDEVIAAADEHGIAMIFTDMRHFRH.

Positions 1–148 constitute an MGS-like domain; sequence MQQRRPVRRA…KNHKDVAIVV (148 aa).

It belongs to the PurH family.

The enzyme catalyses (6R)-10-formyltetrahydrofolate + 5-amino-1-(5-phospho-beta-D-ribosyl)imidazole-4-carboxamide = 5-formamido-1-(5-phospho-D-ribosyl)imidazole-4-carboxamide + (6S)-5,6,7,8-tetrahydrofolate. It carries out the reaction IMP + H2O = 5-formamido-1-(5-phospho-D-ribosyl)imidazole-4-carboxamide. It functions in the pathway purine metabolism; IMP biosynthesis via de novo pathway; 5-formamido-1-(5-phospho-D-ribosyl)imidazole-4-carboxamide from 5-amino-1-(5-phospho-D-ribosyl)imidazole-4-carboxamide (10-formyl THF route): step 1/1. It participates in purine metabolism; IMP biosynthesis via de novo pathway; IMP from 5-formamido-1-(5-phospho-D-ribosyl)imidazole-4-carboxamide: step 1/1. The polypeptide is Bifunctional purine biosynthesis protein PurH (Salmonella schwarzengrund (strain CVM19633)).